A 342-amino-acid polypeptide reads, in one-letter code: MFATPLRQLSSLKRSGIAGQEQAQLYEITNKGYGKDAVKVMHINRKGPVHSIQELEVGTHLKLYSNKDYMLGNNSDVVATDSQKNTVYLLAKKHGIESPEKFALILAKHFLSTYAHVEEVHVHVEAYPWQRMTQDVSDNIGKGYCENNCNSRSNGNCQLHNHAFIFTPTAHDYCDVILTRQDPKQTVISGIKGLRVLKTTQSSFVNFVDDEFRTLADQYDRIFSTVVECSWEYSDTESVNFLHAWETVKDIVVRNFAGDPSVGIPSPSVQHTLYLSEKQVLDVLPQVSVVSMTMPNKHYFNFDTKPFQQLVPGENNEVFIPTDKPHGTIYAQLSRKSLKSHL.

Catalysis depends on charge relay system residues K35 and T80. Residues T80, D81, F204, R221, V269, Q270, and N296 each coordinate urate. H298 (charge relay system) is an active-site residue. The Microbody targeting signal signature appears at 340-342 (SHL).

This sequence belongs to the uricase family. As to expression, malpighian tubules.

Its subcellular location is the peroxisome. It catalyses the reaction urate + O2 + H2O = 5-hydroxyisourate + H2O2. It functions in the pathway purine metabolism; urate degradation; (S)-allantoin from urate: step 1/3. Repressed by 20-hydroxyecdysone. Catalyzes the oxidation of uric acid to 5-hydroxyisourate, which is further processed to form (S)-allantoin. This chain is Uricase (Uro), found in Drosophila virilis (Fruit fly).